Here is a 97-residue protein sequence, read N- to C-terminus: Putative pterin-4-alpha-carbinolamine dehydratase (97 aa).

The protein belongs to the pterin-4-alpha-carbinolamine dehydratase family.

It catalyses the reaction (4aS,6R)-4a-hydroxy-L-erythro-5,6,7,8-tetrahydrobiopterin = (6R)-L-erythro-6,7-dihydrobiopterin + H2O. In Saccharolobus solfataricus (strain ATCC 35092 / DSM 1617 / JCM 11322 / P2) (Sulfolobus solfataricus), this protein is Putative pterin-4-alpha-carbinolamine dehydratase.